We begin with the raw amino-acid sequence, 92 residues long: MARSLKKGPFADQSLLDKVAKQAKSNDKKVIQTWSRRSTIFPEFIGFTIAVYNGREHVPVYVTEDMVGHKLGEFAPTRTFRGHKKEDKKVKR.

It belongs to the universal ribosomal protein uS19 family.

In terms of biological role, protein S19 forms a complex with S13 that binds strongly to the 16S ribosomal RNA. This Acholeplasma laidlawii (strain PG-8A) protein is Small ribosomal subunit protein uS19.